Consider the following 63-residue polypeptide: Light-harvesting protein B-800/850 alpha chain (63 aa).

At 1-14 (MNNAKMWLVVKPTV) the chain is on the cytoplasmic side. The chain crosses the membrane as a helical span at residues 15–35 (GIPLFLVACAIASFLVHLMLV). Histidine 31 contacts a bacteriochlorophyll. Residues 36–63 (LTTGWMGDYYSGSFEAASLVSNATTLLS) lie on the Periplasmic side of the membrane.

It belongs to the antenna complex alpha subunit family. As to quaternary structure, the core complex is formed by different alpha and beta chains, binding bacteriochlorophyll molecules, and arranged most probably in tetrameric structures disposed around the reaction center. The non-pigmented gamma chains may constitute additional components.

Its subcellular location is the cell inner membrane. Its function is as follows. Antenna complexes are light-harvesting systems, which transfer the excitation energy to the reaction centers. This is Light-harvesting protein B-800/850 alpha chain (pucA) from Rhodovulum sulfidophilum (Rhodobacter sulfidophilus).